Here is a 232-residue protein sequence, read N- to C-terminus: 7-cyano-7-deazaguanine synthase (232 aa).

An ATP-binding site is contributed by 7–17 (CSGGLDSVSLA). Zn(2+) is bound by residues C185, C193, C196, and C199.

The protein belongs to the QueC family. Zn(2+) serves as cofactor.

The catalysed reaction is 7-carboxy-7-deazaguanine + NH4(+) + ATP = 7-cyano-7-deazaguanine + ADP + phosphate + H2O + H(+). It functions in the pathway purine metabolism; 7-cyano-7-deazaguanine biosynthesis. Functionally, catalyzes the ATP-dependent conversion of 7-carboxy-7-deazaguanine (CDG) to 7-cyano-7-deazaguanine (preQ(0)). This Chelativorans sp. (strain BNC1) protein is 7-cyano-7-deazaguanine synthase.